The primary structure comprises 400 residues: tRNA(Met) cytidine acetate ligase (400 aa).

ATP contacts are provided by residues 7-20 (IVEY…HLYH), Gly101, Asn159, and 184-185 (RI).

Belongs to the TmcAL family.

The protein resides in the cytoplasm. It carries out the reaction cytidine(34) in elongator tRNA(Met) + acetate + ATP = N(4)-acetylcytidine(34) in elongator tRNA(Met) + AMP + diphosphate. Its function is as follows. Catalyzes the formation of N(4)-acetylcytidine (ac(4)C) at the wobble position of elongator tRNA(Met), using acetate and ATP as substrates. First activates an acetate ion to form acetyladenylate (Ac-AMP) and then transfers the acetyl group to tRNA to form ac(4)C34. The polypeptide is tRNA(Met) cytidine acetate ligase (Caldicellulosiruptor bescii (strain ATCC BAA-1888 / DSM 6725 / KCTC 15123 / Z-1320) (Anaerocellum thermophilum)).